A 152-amino-acid chain; its full sequence is 3-dehydroquinate dehydratase (152 aa).

Tyrosine 25 serves as the catalytic Proton acceptor. Substrate is bound by residues asparagine 76, histidine 82, and aspartate 89. Catalysis depends on histidine 102, which acts as the Proton donor. Substrate contacts are provided by residues 103-104 and arginine 113; that span reads LS.

This sequence belongs to the type-II 3-dehydroquinase family. In terms of assembly, homododecamer.

The catalysed reaction is 3-dehydroquinate = 3-dehydroshikimate + H2O. It participates in metabolic intermediate biosynthesis; chorismate biosynthesis; chorismate from D-erythrose 4-phosphate and phosphoenolpyruvate: step 3/7. Functionally, catalyzes a trans-dehydration via an enolate intermediate. This chain is 3-dehydroquinate dehydratase, found in Gloeothece citriformis (strain PCC 7424) (Cyanothece sp. (strain PCC 7424)).